Here is a 726-residue protein sequence, read N- to C-terminus: 1,4-alpha-glucan branching enzyme GlgB (726 aa).

The active-site Nucleophile is the D407. The active-site Proton donor is the E460.

The protein belongs to the glycosyl hydrolase 13 family. GlgB subfamily. Monomer.

The enzyme catalyses Transfers a segment of a (1-&gt;4)-alpha-D-glucan chain to a primary hydroxy group in a similar glucan chain.. The protein operates within glycan biosynthesis; glycogen biosynthesis. Catalyzes the formation of the alpha-1,6-glucosidic linkages in glycogen by scission of a 1,4-alpha-linked oligosaccharide from growing alpha-1,4-glucan chains and the subsequent attachment of the oligosaccharide to the alpha-1,6 position. This chain is 1,4-alpha-glucan branching enzyme GlgB, found in Hydrogenovibrio crunogenus (strain DSM 25203 / XCL-2) (Thiomicrospira crunogena).